A 241-amino-acid polypeptide reads, in one-letter code: ATP synthase subunit a (241 aa).

Helical transmembrane passes span G30–G50, F91–W111, I128–S148, L193–L213, and G214–G234.

This sequence belongs to the ATPase A chain family. As to quaternary structure, F-type ATPases have 2 components, CF(1) - the catalytic core - and CF(0) - the membrane proton channel. CF(1) has five subunits: alpha(3), beta(3), gamma(1), delta(1), epsilon(1). CF(0) has four main subunits: a, b, b' and c.

Its subcellular location is the cellular thylakoid membrane. Key component of the proton channel; it plays a direct role in the translocation of protons across the membrane. The sequence is that of ATP synthase subunit a from Prochlorococcus marinus (strain AS9601).